The primary structure comprises 223 residues: Phosphoribosylformylglycinamidine synthase subunit PurQ (223 aa).

In terms of domain architecture, Glutamine amidotransferase type-1 spans 3 to 223 (FAVLVFPGSN…MVKSWREQHV (221 aa)). The active-site Nucleophile is the Cys85. Active-site residues include His193 and Glu195.

In terms of assembly, part of the FGAM synthase complex composed of 1 PurL, 1 PurQ and 2 PurS subunits.

The protein localises to the cytoplasm. It carries out the reaction N(2)-formyl-N(1)-(5-phospho-beta-D-ribosyl)glycinamide + L-glutamine + ATP + H2O = 2-formamido-N(1)-(5-O-phospho-beta-D-ribosyl)acetamidine + L-glutamate + ADP + phosphate + H(+). It catalyses the reaction L-glutamine + H2O = L-glutamate + NH4(+). It participates in purine metabolism; IMP biosynthesis via de novo pathway; 5-amino-1-(5-phospho-D-ribosyl)imidazole from N(2)-formyl-N(1)-(5-phospho-D-ribosyl)glycinamide: step 1/2. Its function is as follows. Part of the phosphoribosylformylglycinamidine synthase complex involved in the purines biosynthetic pathway. Catalyzes the ATP-dependent conversion of formylglycinamide ribonucleotide (FGAR) and glutamine to yield formylglycinamidine ribonucleotide (FGAM) and glutamate. The FGAM synthase complex is composed of three subunits. PurQ produces an ammonia molecule by converting glutamine to glutamate. PurL transfers the ammonia molecule to FGAR to form FGAM in an ATP-dependent manner. PurS interacts with PurQ and PurL and is thought to assist in the transfer of the ammonia molecule from PurQ to PurL. The polypeptide is Phosphoribosylformylglycinamidine synthase subunit PurQ (Staphylococcus aureus (strain MRSA252)).